The chain runs to 282 residues: Chorismate dehydratase (282 aa).

This sequence belongs to the MqnA/MqnD family. MqnA subfamily.

It catalyses the reaction chorismate = 3-[(1-carboxyvinyl)-oxy]benzoate + H2O. It functions in the pathway quinol/quinone metabolism; menaquinone biosynthesis. In terms of biological role, catalyzes the dehydration of chorismate into 3-[(1-carboxyvinyl)oxy]benzoate, a step in the biosynthesis of menaquinone (MK, vitamin K2). This Streptomyces coelicolor (strain ATCC BAA-471 / A3(2) / M145) protein is Chorismate dehydratase.